Reading from the N-terminus, the 384-residue chain is Troponin T (384 aa).

The segment covering 1-15 (MSDEEEYSEEEEEVP) has biased composition (acidic residues). 4 disordered regions span residues 1-23 (MSDEEEYSEEEEEVPVDTKPRHS), 61-169 (RAKE…KEQL), 237-257 (LRHKALKKGLDPEALTGKYPP), and 313-384 (PKWF…EEEE). Basic and acidic residues-rich tracts occupy residues 61 to 74 (RAKEEEDLKKLKDK) and 81 to 126 (MRAD…EKKR). The segment covering 316–327 (FGERPGKKKGDP) has biased composition (basic and acidic residues). Over residues 328 to 384 (ESPEEEEVKADAGVDDELEEPTFEPEPEPEPEEEAAEEEAEEEEEEEEEEEEEEEEE) the composition is skewed to acidic residues.

This sequence belongs to the troponin T family.

Troponin T is the tropomyosin-binding subunit of troponin, the thin filament regulatory complex which confers calcium-sensitivity to striated muscle actomyosin ATPase activity. In Periplaneta americana (American cockroach), this protein is Troponin T (TNT).